Reading from the N-terminus, the 256-residue chain is Large ribosomal subunit protein uL2 (256 aa).

Residues 208–230 are disordered; it reads EHPHGGGNHQHIGKASTVKRGTS.

Belongs to the universal ribosomal protein uL2 family. As to expression, in larvae tissues examined: gut, brain imaginal disk, salivary glands, fat body, muscles, epidermis and trachaea.

It is found in the cytoplasm. This Drosophila melanogaster (Fruit fly) protein is Large ribosomal subunit protein uL2 (RpL8).